A 318-amino-acid polypeptide reads, in one-letter code: Sucrose operon repressor (318 aa).

One can recognise an HTH lacI-type domain in the interval 1–56; that stretch reads MIKLEDVANKAGVSVTTVSRVINRKGYLSDATISKVEKAMQDLHYIPNAAARSLQG. Residues 4–23 constitute a DNA-binding region (H-T-H motif); sequence LEDVANKAGVSVTTVSRVIN.

In terms of biological role, this protein may control the expression of the genes that are involved in the transport and catabolism of sucrose. The sequence is that of Sucrose operon repressor (sacR) from Lactococcus lactis subsp. lactis (Streptococcus lactis).